Reading from the N-terminus, the 164-residue chain is Phosphopantetheine adenylyltransferase (164 aa).

T9 is a binding site for substrate. Residues 9–10 and H17 each bind ATP; that span reads TF. 3 residues coordinate substrate: K41, T76, and R90. ATP contacts are provided by residues 91–93, E101, and 126–132; these read GLR and YQFVSSS.

The protein belongs to the bacterial CoaD family. As to quaternary structure, homohexamer. Mg(2+) serves as cofactor.

The protein localises to the cytoplasm. The enzyme catalyses (R)-4'-phosphopantetheine + ATP + H(+) = 3'-dephospho-CoA + diphosphate. Its pathway is cofactor biosynthesis; coenzyme A biosynthesis; CoA from (R)-pantothenate: step 4/5. Reversibly transfers an adenylyl group from ATP to 4'-phosphopantetheine, yielding dephospho-CoA (dPCoA) and pyrophosphate. In Coprothermobacter proteolyticus (strain ATCC 35245 / DSM 5265 / OCM 4 / BT), this protein is Phosphopantetheine adenylyltransferase.